The primary structure comprises 317 residues: Retinol dehydrogenase 16 (317 aa).

Position 33–57 (33–57) interacts with NAD(+); it reads FITGCDSGFGNLLARQLDRRGMRVL. S164 contributes to the substrate binding site. The active-site Proton acceptor is the Y176. A helical membrane pass occupies residues 289–308; sequence FFYLPMSYLPTFLVDALFYW.

It belongs to the short-chain dehydrogenases/reductases (SDR) family. In terms of assembly, homodimer. Not N-glycosylated. In terms of tissue distribution, liver &gt; kidney &gt; brain &gt; lung &gt; testis.

The protein localises to the microsome membrane. It localises to the endoplasmic reticulum membrane. It carries out the reaction all-trans-retinol--[retinol-binding protein] + NAD(+) = all-trans-retinal--[retinol-binding protein] + NADH + H(+). The catalysed reaction is all-trans-retinol + NAD(+) = all-trans-retinal + NADH + H(+). It catalyses the reaction 13-cis-retinol + NAD(+) = 13-cis-retinal + NADH + H(+). The enzyme catalyses 11-cis-retinol + NAD(+) = 11-cis-retinal + NADH + H(+). It carries out the reaction 9-cis-retinol + NAD(+) = 9-cis-retinal + NADH + H(+). The catalysed reaction is 5alpha-androstane-3alpha,17beta-diol + NAD(+) = 17beta-hydroxy-5alpha-androstan-3-one + NADH + H(+). It catalyses the reaction androsterone + NAD(+) = 5alpha-androstan-3,17-dione + NADH + H(+). The protein operates within cofactor metabolism; retinol metabolism. Its function is as follows. Oxidoreductase with a preference for NAD. Oxidizes all-trans-retinol, 9-cis-retinol, 11-cis-retinol and 13-cis-retinol to the corresponding aldehydes. Has higher activity towards CRBP-bound retinol than with free retinol. Oxidizes 3-alpha-hydroxysteroids. Oxidizes androstanediol and androsterone to dihydrotestosterone and androstanedione. Can also catalyze the reverse reaction. The protein is Retinol dehydrogenase 16 of Rattus norvegicus (Rat).